A 124-amino-acid chain; its full sequence is Large ribosomal subunit protein bL12 (124 aa).

The protein belongs to the bacterial ribosomal protein bL12 family. In terms of assembly, homodimer. Part of the ribosomal stalk of the 50S ribosomal subunit. Forms a multimeric L10(L12)X complex, where L10 forms an elongated spine to which 2 to 4 L12 dimers bind in a sequential fashion. Binds GTP-bound translation factors.

Functionally, forms part of the ribosomal stalk which helps the ribosome interact with GTP-bound translation factors. Is thus essential for accurate translation. In Vesicomyosocius okutanii subsp. Calyptogena okutanii (strain HA), this protein is Large ribosomal subunit protein bL12.